A 1041-amino-acid polypeptide reads, in one-letter code: Sodium/potassium-transporting ATPase subunit alpha (1041 aa).

4 helical membrane passes run 115–135, 147–167, 312–332, and 338–358; these read FGGF…AYSI, NLYL…FSYY, LITG…FILG, and AVIF…LATV. Residue Asp394 is the 4-aspartylphosphate intermediate of the active site. Lys526 is a binding site for ATP. The next 4 helical transmembrane spans lie at 808–828, 870–890, 935–955, and 970–990; these read FLAF…ILCI, MAYG…YFVI, TCHT…LIIC, and WALN…SYCP.

Belongs to the cation transport ATPase (P-type) (TC 3.A.3) family. Type IIC subfamily. As to quaternary structure, the sodium/potassium-transporting ATPase is composed of a catalytic alpha subunit, an auxiliary non-catalytic beta subunit and an additional regulatory subunit. In terms of tissue distribution, high levels are found in some adult tissues: Malpighian tubules, indirect flight muscles, tubular leg muscles and throughout the nervous system (brain, optic lobes, retina and ventral thoracic neuromere). Lower levels are detected at the posterior end where the reproductive organs and rectum are located.

The protein localises to the cell membrane. It carries out the reaction K(+)(out) + Na(+)(in) + ATP + H2O = K(+)(in) + Na(+)(out) + ADP + phosphate + H(+). This is the catalytic component of the active enzyme, which catalyzes the hydrolysis of ATP coupled with the exchange of sodium and potassium ions across the plasma membrane. This action creates the electrochemical gradient of sodium and potassium ions, providing the energy for active transport of various nutrients. This Drosophila melanogaster (Fruit fly) protein is Sodium/potassium-transporting ATPase subunit alpha (Atpalpha).